The chain runs to 448 residues: MQVPKNNIYTVSRLNGEVRQILEGQLGKVWLNGEISNFSAPSSGHWYLTLKDHYSQIRCAMFKGRNQSVSFKPVNGQQVLVKGAISVYEPRGDYQLLIESMLPAGDGLLAQQFEALKMKLAAQGLFAADTKRQLPKNIQRIGVITSPSGAAIRDVLHVLARRDPSIEVIIYPTQVQGESADLNICQAINIANQRLEVDVLLLTRGGGSLEDLWCFNSEALAHTIYNSALPVVSAVGHEVDTTISDYVADVRAPTPSAGAELLSQDSDNKSQRLATVLSRLKQSASHYQLKQERRLSLLEHRLQRLDPKRTLQQFEQRFDEMQLRLEAALSNKLHGLSRRQQQLASRLEQQSPKHKLALETNRLSYLATRLQDAMQDTLNQSEQRVKYAAHQLETVSPLATLSRGYSITTDANHQVIDNAAQLSVGDKINTRLRHGQVQSTVTQITDES.

It belongs to the XseA family. As to quaternary structure, heterooligomer composed of large and small subunits.

It localises to the cytoplasm. The catalysed reaction is Exonucleolytic cleavage in either 5'- to 3'- or 3'- to 5'-direction to yield nucleoside 5'-phosphates.. In terms of biological role, bidirectionally degrades single-stranded DNA into large acid-insoluble oligonucleotides, which are then degraded further into small acid-soluble oligonucleotides. This Shewanella sp. (strain MR-4) protein is Exodeoxyribonuclease 7 large subunit.